We begin with the raw amino-acid sequence, 244 residues long: Phosphoadenosine 5'-phosphosulfate reductase (244 aa).

The active-site Nucleophile; cysteine thiosulfonate intermediate is C239.

The protein belongs to the PAPS reductase family. CysH subfamily.

It is found in the cytoplasm. The enzyme catalyses [thioredoxin]-disulfide + sulfite + adenosine 3',5'-bisphosphate + 2 H(+) = [thioredoxin]-dithiol + 3'-phosphoadenylyl sulfate. Its pathway is sulfur metabolism; hydrogen sulfide biosynthesis; sulfite from sulfate: step 3/3. Functionally, catalyzes the formation of sulfite from phosphoadenosine 5'-phosphosulfate (PAPS) using thioredoxin as an electron donor. The chain is Phosphoadenosine 5'-phosphosulfate reductase from Escherichia coli O8 (strain IAI1).